The chain runs to 501 residues: Glutamyl-tRNA(Gln) amidotransferase subunit A (501 aa).

Catalysis depends on charge relay system residues Lys80 and Ser155. The Acyl-ester intermediate role is filled by Ser179.

Belongs to the amidase family. GatA subfamily. As to quaternary structure, heterotrimer of A, B and C subunits.

It carries out the reaction L-glutamyl-tRNA(Gln) + L-glutamine + ATP + H2O = L-glutaminyl-tRNA(Gln) + L-glutamate + ADP + phosphate + H(+). Its function is as follows. Allows the formation of correctly charged Gln-tRNA(Gln) through the transamidation of misacylated Glu-tRNA(Gln) in organisms which lack glutaminyl-tRNA synthetase. The reaction takes place in the presence of glutamine and ATP through an activated gamma-phospho-Glu-tRNA(Gln). The protein is Glutamyl-tRNA(Gln) amidotransferase subunit A of Cupriavidus taiwanensis (strain DSM 17343 / BCRC 17206 / CCUG 44338 / CIP 107171 / LMG 19424 / R1) (Ralstonia taiwanensis (strain LMG 19424)).